A 511-amino-acid polypeptide reads, in one-letter code: 2,3-bisphosphoglycerate-independent phosphoglycerate mutase (511 aa).

Positions 14 and 64 each coordinate Mn(2+). Serine 64 (phosphoserine intermediate) is an active-site residue. Substrate-binding positions include histidine 125, 155-156 (RD), arginine 187, arginine 193, 259-262 (RADR), and lysine 333. Positions 400, 404, 441, 442, and 460 each coordinate Mn(2+).

Belongs to the BPG-independent phosphoglycerate mutase family. Monomer. Mn(2+) serves as cofactor.

It carries out the reaction (2R)-2-phosphoglycerate = (2R)-3-phosphoglycerate. The protein operates within carbohydrate degradation; glycolysis; pyruvate from D-glyceraldehyde 3-phosphate: step 3/5. Catalyzes the interconversion of 2-phosphoglycerate and 3-phosphoglycerate. The polypeptide is 2,3-bisphosphoglycerate-independent phosphoglycerate mutase (Pseudoalteromonas atlantica (strain T6c / ATCC BAA-1087)).